The following is a 500-amino-acid chain: Putative glucokinase-2 (500 aa).

An N-acetylserine modification is found at Ser2. A Phosphoserine modification is found at Ser2. In terms of domain architecture, Hexokinase spans 12–498 (EALEDAVVEI…SGVGAALCAL (487 aa)). Positions 74–217 (NGTERGVLLA…LSMINVVALT (144 aa)) are hexokinase small subdomain. Residue Lys110 participates in ATP binding. Residues 159–185 (KMGFTFSYPVDQTSLSSGTLIRWTKSF) form a glucose-binding region. The tract at residues 218–487 (NDTVGTFLSH…RKIHLRLAKD (270 aa)) is hexokinase large subdomain. Position 470 is a phosphoserine (Ser470). 487–492 (DGSGVG) is an ATP binding site.

This sequence belongs to the hexokinase family.

The protein localises to the cytoplasm. The enzyme catalyses D-glucose + ATP = D-glucose 6-phosphate + ADP + H(+). It functions in the pathway carbohydrate degradation; glycolysis; D-glyceraldehyde 3-phosphate and glycerone phosphate from D-glucose: step 1/4. Its function is as follows. Putative glucokinase involved in phosphorylation of aldohexoses and glucose uptake. Involved in sporulation. Required for the full activation of the early meiotic inducer IME1. The polypeptide is Putative glucokinase-2 (EMI2) (Saccharomyces cerevisiae (strain ATCC 204508 / S288c) (Baker's yeast)).